A 396-amino-acid chain; its full sequence is Pyridinium-3,5-bisthiocarboxylic acid mononucleotide nickel insertion protein (396 aa).

It belongs to the LarC family.

It catalyses the reaction Ni(II)-pyridinium-3,5-bisthiocarboxylate mononucleotide = pyridinium-3,5-bisthiocarboxylate mononucleotide + Ni(2+). Functionally, involved in the biosynthesis of a nickel-pincer cofactor ((SCS)Ni(II) pincer complex). Binds Ni(2+), and functions in nickel delivery to pyridinium-3,5-bisthiocarboxylic acid mononucleotide (P2TMN), to form the mature cofactor. Is thus probably required for the activation of nickel-pincer cofactor-dependent enzymes. This Moorella thermoacetica (strain ATCC 39073 / JCM 9320) protein is Pyridinium-3,5-bisthiocarboxylic acid mononucleotide nickel insertion protein.